The following is a 728-amino-acid chain: Methylmalonyl-CoA mutase large subunit (728 aa).

(R)-methylmalonyl-CoA is bound by residues Y75, M78, R82, T85, R87, Y89, and S114. Cob(II)alamin is bound by residues F117 and A139. Residues T195 and Q197 each contribute to the (R)-methylmalonyl-CoA site. 2 residues coordinate cob(II)alamin: V206 and R207. The (R)-methylmalonyl-CoA site is built by R207, H244, R283, and S285. Residues G333, E370, A373, G609, H610, D611, R612, S655, L657, G686, and T709 each coordinate cob(II)alamin. A B12-binding domain is found at 597 to 728 (RPRILLAKMG…VKKLRASLDA (132 aa)).

The protein belongs to the methylmalonyl-CoA mutase family. Heterodimer of an alpha and a beta chain. Adenosylcob(III)alamin serves as cofactor.

The catalysed reaction is (R)-methylmalonyl-CoA = succinyl-CoA. In terms of biological role, catalyzes the reversible conversion of succinyl-CoA to (R)-methylmalonyl-CoA through a radical mechanism. Is involved in the fermentation of pyruvate to propanoate that occurs in Propionibacteria. The sequence is that of Methylmalonyl-CoA mutase large subunit (mutB) from Propionibacterium freudenreichii subsp. shermanii.